An 822-amino-acid chain; its full sequence is MKFSLSWLREHLDFTASVEEICARLNIIGLEVEGVENPADRLVGFRTAKIVEAHRHPDADRLQVCRVAAGAGFEDVQVVCGAPNARAGLHVIFATPGTYVPGLDITIKKGKIRGQDSGGMLCSLRELGIGEESNGIAELSETAPIGESYAAYAELDDPVIEIAITPNRGDALSIRGIARDLAAGGIGHLKPWLTEAVEGDFPSPLTWKTEHPACPYIVGRVIRGVKNGPSPDWLQRRLESVGVKPISALVDVTNYLTYDLGRPLHVFDVAKLKGDTLTVTHAARETFTGLDGREYVLGTEDMIIVDEAGVQSLAGLIGGESSGVDENTIDVFVESALFDPVRIALTGRRLAIHTDARQRFERGIDPAQVLNGLEAATVMIRDLCGGEVSEITEAGALPDWKRTARLRFERLKTLGGVDIAADDTVRSLEHLGFEVTERTEDAATFLVPSWRNDIASGQVLAQAPTLDEDVASRAASHVQAMEAECDLLEEVLRLYGLDNVPAVALPQTTVVPAPAVTPLQARAALLRRVCAARGLTETVGFSFVAQDDAALFGDVPETQHLLNPIATDLDQLRPTPLINLARALSRNLARGLGLSGEGALFEVGPSFDATGQHLRLAGLRAGLTAREPGVAAHEATLWEAKADLTAALVALGVPEAALSVTADAPGFYHPGRSGQVRQGPKMVLGTFGELHPRVARALGLSGTVVAFEVYLDQVPLPKAKRKAAPVLSPLQPVRRDFAFVAGPDVEIQAVLKAARMADRNLVQDVRLFDVFEGGSLPEGHRSLGVEVVLQPQSESLTDTQLEAVSKSVEAAVLKATGAVLRR.

The tRNA-binding domain occupies 39-150 (ADRLVGFRTA…ETAPIGESYA (112 aa)). One can recognise a B5 domain in the interval 399–502 (DWKRTARLRF…RLYGLDNVPA (104 aa)). Asp486, Glu489, and Glu490 together coordinate Mg(2+). Positions 728 to 821 (SPLQPVRRDF…VLKATGAVLR (94 aa)) constitute an FDX-ACB domain.

The protein belongs to the phenylalanyl-tRNA synthetase beta subunit family. Type 1 subfamily. In terms of assembly, tetramer of two alpha and two beta subunits. The cofactor is Mg(2+).

It localises to the cytoplasm. It catalyses the reaction tRNA(Phe) + L-phenylalanine + ATP = L-phenylalanyl-tRNA(Phe) + AMP + diphosphate + H(+). The polypeptide is Phenylalanine--tRNA ligase beta subunit (Gluconobacter oxydans (strain 621H) (Gluconobacter suboxydans)).